The primary structure comprises 129 residues: Large ribosomal subunit protein bL17 (129 aa).

This sequence belongs to the bacterial ribosomal protein bL17 family. Part of the 50S ribosomal subunit. Contacts protein L32.

This Hahella chejuensis (strain KCTC 2396) protein is Large ribosomal subunit protein bL17.